We begin with the raw amino-acid sequence, 456 residues long: Phosphatidylinositol N-acetylglucosaminyltransferase gpi3 subunit (456 aa).

This sequence belongs to the glycosyltransferase group 1 family. Glycosyltransferase 4 subfamily. Component of a Phosphatidylinositol N-acetylglucosaminyltransferase complex.

It catalyses the reaction a 1,2-diacyl-sn-glycero-3-phospho-(1D-myo-inositol) + UDP-N-acetyl-alpha-D-glucosamine = a 6-(N-acetyl-alpha-D-glucosaminyl)-1-(1,2-diacyl-sn-glycero-3-phospho)-1D-myo-inositol + UDP + H(+). It participates in glycolipid biosynthesis; glycosylphosphatidylinositol-anchor biosynthesis. In terms of biological role, catalytic subunit in the complex catalyzing the transfer of N-acetylglucosamine from UDP-N-acetylglucosamine to phosphatidylinositol, the first step of GPI biosynthesis. This is Phosphatidylinositol N-acetylglucosaminyltransferase gpi3 subunit (gpi3) from Schizosaccharomyces pombe (strain 972 / ATCC 24843) (Fission yeast).